The following is a 419-amino-acid chain: GTPase Obg (419 aa).

The Obg domain maps to 1–156; the sequence is MRFVDYVSIE…FYLDLQLKVM (156 aa). In terms of domain architecture, OBG-type G spans 157-334; sequence ADIGLVGKPN…LGENQKKLEI (178 aa). GTP-binding positions include 163 to 170, 188 to 192, 209 to 212, 278 to 281, and 315 to 317; these read GKPNAGKS, FTTLV, DLPG, NKCD, and NII. Residues S170 and T190 each contribute to the Mg(2+) site. An OCT domain is found at 342–419; the sequence is IEFNLKAPFL…RIYEFEFHWN (78 aa).

The protein belongs to the TRAFAC class OBG-HflX-like GTPase superfamily. OBG GTPase family. In terms of assembly, monomer. Mg(2+) is required as a cofactor.

The protein localises to the cytoplasm. In terms of biological role, an essential GTPase which binds GTP, GDP and possibly (p)ppGpp with moderate affinity, with high nucleotide exchange rates and a fairly low GTP hydrolysis rate. Plays a role in control of the cell cycle, stress response, ribosome biogenesis and in those bacteria that undergo differentiation, in morphogenesis control. The sequence is that of GTPase Obg from Mesomycoplasma hyopneumoniae (strain 7448) (Mycoplasma hyopneumoniae).